The chain runs to 399 residues: Long-chain primary alcohol dehydrogenase AdhA (399 aa).

It belongs to the iron-containing alcohol dehydrogenase family. Homotetramer. It depends on Zn(2+) as a cofactor.

It catalyses the reaction a primary alcohol + NADP(+) = an aldehyde + NADPH + H(+). Its function is as follows. Alcohol dehydrogenase active against primary long-chain alcohols. Pentan-1-ol is the optimum substrate in vitro, but also shows efficient dehydrogenase activity on propanol, hexanol, and ethanol. The protein is Long-chain primary alcohol dehydrogenase AdhA (adhA) of Thermoanaerobacter ethanolicus (Clostridium thermohydrosulfuricum).